A 721-amino-acid polypeptide reads, in one-letter code: Peptide-N(4)-(N-acetyl-beta-glucosaminyl)asparagine amidase (721 aa).

Positions 193, 196, 225, and 228 each coordinate Zn(2+). C251 (nucleophile) is an active-site residue. Catalysis depends on residues H278 and D295.

The protein belongs to the transglutaminase-like superfamily. PNGase family. It depends on Zn(2+) as a cofactor.

It localises to the cytoplasm. It catalyses the reaction Hydrolysis of an N(4)-(acetyl-beta-D-glucosaminyl)asparagine residue in which the glucosamine residue may be further glycosylated, to yield a (substituted) N-acetyl-beta-D-glucosaminylamine and a peptide containing an aspartate residue.. Specifically deglycosylates the denatured form of N-linked glycoproteins in the cytoplasm and assists their proteasome-mediated degradation. Cleaves the beta-aspartyl-glucosamine (GlcNAc) of the glycan and the amide side chain of Asn, converting Asn to Asp. Prefers proteins containing high-mannose over those bearing complex type oligosaccharides. Can recognize misfolded proteins in the endoplasmic reticulum that are exported to the cytosol to be destroyed and deglycosylate them, while it has no activity toward native proteins. Deglycosylation is a prerequisite for subsequent proteasome-mediated degradation of some, but not all, misfolded glycoproteins. This Arabidopsis thaliana (Mouse-ear cress) protein is Peptide-N(4)-(N-acetyl-beta-glucosaminyl)asparagine amidase (PNG1).